The sequence spans 181 residues: MAINDQNLIWVDLEMTGLDPETHKIIEIASIVTDAQLNILAEGPVIAIHQPEEELAKMDNWCTNTHTNSGLVARVQESKYDEEAAIAETIAFLEQWVPKGVSPICGNSIGQDRRFLYKHMPRLEEYFHYRYVDVSTIKELARRWKPEVLDGFTKAGTHLALDDIRESIAELKYYRQHIFTI.

Residues Leu-8 to Leu-171 enclose the Exonuclease domain. The active site involves Tyr-129.

It belongs to the oligoribonuclease family.

It is found in the cytoplasm. 3'-to-5' exoribonuclease specific for small oligoribonucleotides. This chain is Oligoribonuclease, found in Aliivibrio fischeri (strain ATCC 700601 / ES114) (Vibrio fischeri).